A 309-amino-acid chain; its full sequence is Aspartate carbamoyltransferase catalytic subunit (309 aa).

2 residues coordinate carbamoyl phosphate: Arg55 and Thr56. Lys85 serves as a coordination point for L-aspartate. 3 residues coordinate carbamoyl phosphate: Arg106, His135, and Gln138. L-aspartate is bound by residues Arg168 and Arg230. 2 residues coordinate carbamoyl phosphate: Leu268 and Pro269.

This sequence belongs to the aspartate/ornithine carbamoyltransferase superfamily. ATCase family. In terms of assembly, heterododecamer (2C3:3R2) of six catalytic PyrB chains organized as two trimers (C3), and six regulatory PyrI chains organized as three dimers (R2).

The enzyme catalyses carbamoyl phosphate + L-aspartate = N-carbamoyl-L-aspartate + phosphate + H(+). It participates in pyrimidine metabolism; UMP biosynthesis via de novo pathway; (S)-dihydroorotate from bicarbonate: step 2/3. Catalyzes the condensation of carbamoyl phosphate and aspartate to form carbamoyl aspartate and inorganic phosphate, the committed step in the de novo pyrimidine nucleotide biosynthesis pathway. This Vibrio vulnificus (strain YJ016) protein is Aspartate carbamoyltransferase catalytic subunit.